Here is a 175-residue protein sequence, read N- to C-terminus: Large ribosomal subunit protein bL17 (175 aa).

The tract at residues 127 to 175 is disordered; it reads GEAEAATKRAVKEDALKKDEAPAAESVEDAKPAEDAPAAEAADDKGKDA. Positions 131–147 are enriched in basic and acidic residues; the sequence is AATKRAVKEDALKKDEA.

This sequence belongs to the bacterial ribosomal protein bL17 family. As to quaternary structure, part of the 50S ribosomal subunit. Contacts protein L32.

This is Large ribosomal subunit protein bL17 from Streptomyces griseus subsp. griseus (strain JCM 4626 / CBS 651.72 / NBRC 13350 / KCC S-0626 / ISP 5235).